A 428-amino-acid polypeptide reads, in one-letter code: Histidine--tRNA ligase (428 aa).

It belongs to the class-II aminoacyl-tRNA synthetase family. Homodimer.

The protein resides in the cytoplasm. It carries out the reaction tRNA(His) + L-histidine + ATP = L-histidyl-tRNA(His) + AMP + diphosphate + H(+). This Mesomycoplasma hyopneumoniae (strain 7448) (Mycoplasma hyopneumoniae) protein is Histidine--tRNA ligase.